We begin with the raw amino-acid sequence, 698 residues long: Probable metal-nicotianamine transporter YSL17 (698 aa).

The interval 1–36 (MAEEARGGQRVVVDDDREDASSVASSTERAFEGEPL) is disordered. Transmembrane regions (helical) follow at residues 43–63 (VTAR…VVAM), 67–87 (LTSG…FFLA), 114–134 (IAVV…YILG), 157–177 (IGRV…IIVP), 216–236 (VVTL…QWFF), 277–297 (MITA…WPYI), 322–342 (VFVG…SALV), 395–415 (WVAV…VPLL), 424–444 (VAAA…GVGV), 463–483 (SWVG…GIIV), 511–531 (VGQV…FWVF), 567–587 (LPDH…ALSA), 607–627 (IGVA…AVGC), and 644–664 (LLLP…SLAS).

It belongs to the YSL (TC 2.A.67.2) family. As to expression, expressed at low levels in roots.

The protein localises to the membrane. In terms of biological role, may be involved in the transport of nicotianamine-chelated metals. The protein is Probable metal-nicotianamine transporter YSL17 (YSL17) of Oryza sativa subsp. japonica (Rice).